We begin with the raw amino-acid sequence, 206 residues long: Large ribosomal subunit protein uL4 (206 aa).

The disordered stretch occupies residues glycine 46–threonine 77.

Belongs to the universal ribosomal protein uL4 family. In terms of assembly, part of the 50S ribosomal subunit.

Functionally, one of the primary rRNA binding proteins, this protein initially binds near the 5'-end of the 23S rRNA. It is important during the early stages of 50S assembly. It makes multiple contacts with different domains of the 23S rRNA in the assembled 50S subunit and ribosome. Its function is as follows. Forms part of the polypeptide exit tunnel. The chain is Large ribosomal subunit protein uL4 from Paracidovorax citrulli (strain AAC00-1) (Acidovorax citrulli).